Consider the following 447-residue polypeptide: Nacrein (447 aa).

The N-terminal stretch at Met1–Gly17 is a signal peptide. The N-linked (GlcNAc...) asparagine glycan is linked to Asn44. In terms of domain architecture, Alpha-carbonic anhydrase spans Ala50–Phe446. Residues His149, His151, and His174 each coordinate Zn(2+). Positions Asp218–Arg329 are disordered. Residues Glu224–Asn236 are compositionally biased toward basic and acidic residues. Residues Asn237–Glu321 are compositionally biased toward low complexity. A run of 27 repeats spans residues Gly242–Asn244, Gly245–Asn247, Gly248–Asn250, Gly251–Asn253, Gly254–Asn256, Gly257–Asn259, Gly260–Asn262, Ser263–Asn265, Gly266–Asn268, Gly269–Asn271, Gly272–Asn274, Gly275–Asn277, Gly278–Asn280, Gly281–Asn283, Gly284–Asn286, Gly287–Asn289, Gly290–Asn292, Gly293–Asn295, Gly296–Asn298, Gly299–Asn301, Gly302–Asn304, Gly305–Asn307, Gly308–Asn310, Gly311–Asn313, Gly314–Asn316, Gly317–Asn318, and Gly320–Asn322. A 27 X 3 AA approximate tandem repeats of G-X-N region spans residues Gly242–Asn322. A glycan (N-linked (GlcNAc...) asparagine) is linked at Asn261. Thr387–Thr388 contacts substrate.

Belongs to the alpha-carbonic anhydrase family. Homooligomer; disulfide-linked. May also be disulfide-linked to insoluble organic matrix. Zn(2+) serves as cofactor. N-glycosylated. Expressed at whole regions of the mantle epithelium tissue. Is found in the aragonitic nacreous and calcitic prismatic and foliated layers.

The protein localises to the secreted. The protein resides in the extracellular space. Its subcellular location is the extracellular matrix. It carries out the reaction hydrogencarbonate + H(+) = CO2 + H2O. Its function is as follows. Acts as a negative regulator for calcification in the shells of mollusks. May function both as a calcium concentrator and as a carbonic anhydrase required for production of carbonate ions, which are assembled to CaCO(3) at mineralization sites. Is important for shell formation in both the calcitic prismatic layer and the aragonitic nacreous layer. The sequence is that of Nacrein from Pinctada fucata (Akoya pearl oyster).